A 102-amino-acid chain; its full sequence is uncharacterized protein (102 aa).

Residues 5 to 27 (IYRSNLVIVITLFVSLSYYHTCF) form a helical membrane-spanning segment.

The protein resides in the host membrane. This is an uncharacterized protein from Microplitis demolitor (Parasitoid wasp).